A 705-amino-acid chain; its full sequence is Polyribonucleotide nucleotidyltransferase (705 aa).

Mg(2+)-binding residues include D486 and D492. Residues 553–612 (PRIYTMKINPEKIKDVIGKGGSVIRALTDETGTTIEIEDDGTIKIAATDGDKAKHAIRRI) enclose the KH domain. The 69-residue stretch at 622–690 (GRIYAGKVTR…RQGRIRLSIK (69 aa)) folds into the S1 motif domain.

This sequence belongs to the polyribonucleotide nucleotidyltransferase family. As to quaternary structure, component of the RNA degradosome, which is a multiprotein complex involved in RNA processing and mRNA degradation. Requires Mg(2+) as cofactor.

Its subcellular location is the cytoplasm. It carries out the reaction RNA(n+1) + phosphate = RNA(n) + a ribonucleoside 5'-diphosphate. In terms of biological role, involved in mRNA degradation. Catalyzes the phosphorolysis of single-stranded polyribonucleotides processively in the 3'- to 5'-direction. This is Polyribonucleotide nucleotidyltransferase from Yersinia pestis bv. Antiqua (strain Nepal516).